A 330-amino-acid chain; its full sequence is Ketol-acid reductoisomerase (NADP(+)) (330 aa).

The region spanning 1–181 (MKVFYDSDFK…GLSRAGVIQT (181 aa)) is the KARI N-terminal Rossmann domain. NADP(+) is bound by residues 24-27 (YGSQ), R47, S52, and 82-85 (DELQ). H107 is an active-site residue. G133 contacts NADP(+). Residues 182-327 (TFKEETETDL…AKLRKMCGLE (146 aa)) form the KARI C-terminal knotted domain. 4 residues coordinate Mg(2+): D190, E194, E226, and E230. S251 contacts substrate.

Belongs to the ketol-acid reductoisomerase family. Mg(2+) serves as cofactor.

It carries out the reaction (2R)-2,3-dihydroxy-3-methylbutanoate + NADP(+) = (2S)-2-acetolactate + NADPH + H(+). The enzyme catalyses (2R,3R)-2,3-dihydroxy-3-methylpentanoate + NADP(+) = (S)-2-ethyl-2-hydroxy-3-oxobutanoate + NADPH + H(+). Its pathway is amino-acid biosynthesis; L-isoleucine biosynthesis; L-isoleucine from 2-oxobutanoate: step 2/4. The protein operates within amino-acid biosynthesis; L-valine biosynthesis; L-valine from pyruvate: step 2/4. In terms of biological role, involved in the biosynthesis of branched-chain amino acids (BCAA). Catalyzes an alkyl-migration followed by a ketol-acid reduction of (S)-2-acetolactate (S2AL) to yield (R)-2,3-dihydroxy-isovalerate. In the isomerase reaction, S2AL is rearranged via a Mg-dependent methyl migration to produce 3-hydroxy-3-methyl-2-ketobutyrate (HMKB). In the reductase reaction, this 2-ketoacid undergoes a metal-dependent reduction by NADPH to yield (R)-2,3-dihydroxy-isovalerate. This Methanococcus maripaludis (strain C5 / ATCC BAA-1333) protein is Ketol-acid reductoisomerase (NADP(+)).